Reading from the N-terminus, the 121-residue chain is Large ribosomal subunit protein uL14 (121 aa).

This sequence belongs to the universal ribosomal protein uL14 family. Part of the 50S ribosomal subunit. Forms a cluster with proteins L3 and L19. In the 70S ribosome, L14 and L19 interact and together make contacts with the 16S rRNA in bridges B5 and B8.

Functionally, binds to 23S rRNA. Forms part of two intersubunit bridges in the 70S ribosome. In Synechococcus sp. (strain CC9311), this protein is Large ribosomal subunit protein uL14.